The sequence spans 179 residues: uncharacterized protein (179 aa).

Residues 1–32 (MELQGAQEDLGISLSSPRRNHETRPGSKAKGR) form a disordered region.

This is an uncharacterized protein from Homo sapiens (Human).